Consider the following 110-residue polypeptide: UPF0145 protein BLD_1357 (110 aa).

This sequence belongs to the UPF0145 family.

The sequence is that of UPF0145 protein BLD_1357 from Bifidobacterium longum (strain DJO10A).